Reading from the N-terminus, the 313-residue chain is Ribosomal RNA small subunit methyltransferase I (313 aa).

Residues methionine 1–arginine 23 form a disordered region.

This sequence belongs to the methyltransferase superfamily. RsmI family.

The protein localises to the cytoplasm. The catalysed reaction is cytidine(1402) in 16S rRNA + S-adenosyl-L-methionine = 2'-O-methylcytidine(1402) in 16S rRNA + S-adenosyl-L-homocysteine + H(+). In terms of biological role, catalyzes the 2'-O-methylation of the ribose of cytidine 1402 (C1402) in 16S rRNA. The sequence is that of Ribosomal RNA small subunit methyltransferase I from Micromonospora olivasterospora.